The following is a 175-amino-acid chain: MYLARTRFLFFLASLACASIIGVAFYLQQAVGLDPCTLCMVQRAAFIACGVLALCAACHAPGPTGTRRYSLGLLLVALAGLAGAGTQVWLQTASADQLIPFITRLEQILSLLSLDMCIDRLRSDALFCAEITWTLFGISLPEWSLLAFTGLALLPLYPLFSELSHWLATRDRGGY.

Residues 1 to 9 (MYLARTRFL) lie on the Cytoplasmic side of the membrane. A helical transmembrane segment spans residues 10–26 (FFLASLACASIIGVAFY). Residues 27–44 (LQQAVGLDPCTLCMVQRA) lie on the Periplasmic side of the membrane. C36 and C39 form a disulfide bridge. Residues 45–61 (AFIACGVLALCAACHAP) traverse the membrane as a helical segment. Residues 62-68 (GPTGTRR) lie on the Cytoplasmic side of the membrane. A helical membrane pass occupies residues 69 to 85 (YSLGLLLVALAGLAGAG). Over 86–142 (TQVWLQTASADQLIPFITRLEQILSLLSLDMCIDRLRSDALFCAEITWTLFGISLPE) the chain is Periplasmic. A helical membrane pass occupies residues 143 to 161 (WSLLAFTGLALLPLYPLFS). The Cytoplasmic segment spans residues 162 to 175 (ELSHWLATRDRGGY).

This sequence belongs to the DsbB family.

Its subcellular location is the cell inner membrane. Its function is as follows. Required for disulfide bond formation in some periplasmic proteins. Acts by oxidizing the DsbA protein. In Pseudomonas syringae pv. syringae (strain B728a), this protein is Disulfide bond formation protein B 2.